A 235-amino-acid polypeptide reads, in one-letter code: Large ribosomal subunit protein uL1 (235 aa).

The protein belongs to the universal ribosomal protein uL1 family. Part of the 50S ribosomal subunit.

Binds directly to 23S rRNA. The L1 stalk is quite mobile in the ribosome, and is involved in E site tRNA release. Functionally, protein L1 is also a translational repressor protein, it controls the translation of the L11 operon by binding to its mRNA. This Prochlorococcus marinus (strain MIT 9301) protein is Large ribosomal subunit protein uL1.